We begin with the raw amino-acid sequence, 384 residues long: uncharacterized protein (384 aa).

12 consecutive transmembrane segments (helical) span residues 22-42 (LAFF…PFAK), 52-72 (LGLL…LTGV), 81-101 (AVIL…VLMN), 106-126 (MAIA…AMNI), 143-163 (FHGL…ALLW), 164-184 (LGLN…ILLL), 202-222 (LFVF…VMFL), 240-260 (GMSP…MTLG), 276-296 (VLLG…SIDS), 299-319 (AAII…PILF), 327-347 (VMPA…GILA), and 352-372 (IGFI…ALLL).

It belongs to the major facilitator superfamily.

It localises to the membrane. This is an uncharacterized protein from Yersinia pestis.